We begin with the raw amino-acid sequence, 305 residues long: Dioxygenase hkm4 (305 aa).

Fe cation-binding residues include His140, Asp142, and His216.

The protein belongs to the PhyH family. Fe cation serves as cofactor.

Its pathway is secondary metabolite biosynthesis. Its function is as follows. Dioxygenase; part of the gene cluster that mediates the biosynthesis of hancockiamides, an unusual new family of N-cinnamoylated piperazines. The NRPS hkm10 and the NmrA-like reductase hkm9 are proposed to convert two molecules of L-Phe to the intermediary piperazine called xenocockiamide A. Xenocockiamide A is then converted to hancockiamide D via a series of hydroxylations and O-methylations. The tyrosinase hkm6 may catalyze an aromatic hydroxylation, then the 2-oxoglutarate-dependent Fe(II) dioxygenase hkm4 and the FAD-dependent phenol hydroxylase hkm7 may catalyze consecutive hydroxylations to install 2 more hydroxy groups, and the methyltransferase hkm8 probably catalyzes two methylations using 2 molecules of S-adenosyl-L-methionine (SAM). The NRPS hkm11 activates and transfers trans-cinnamate supplied by the PAL hkm12 to hancockiamide D and produces hancockiamide A. NRPS Hkm11 has the flexibility to tolerate the bulky hancockiamide G as a substrate and the absence of the acetyl-transferase hkm3 opens up the opportunity for hkm11 to introduce a second N-cinnamoyl moiety. The cytochrome P450 monooxygenase hkm5 catalyzes the methylenedioxy bridge formation, converting hancockiamide A into hancockiamide G. Hkm5 can also convert hancockiamide B into hancockiamide C, and hancockiamide D into hancockiamide H. The N-acetyltransferase hkm3 finally transfers an acetyl group to 1-N of piperazine, converting hancockiamide A into hancockiamide B and hancockiamide G into hancockiamide C. This is Dioxygenase hkm4 from Aspergillus hancockii.